Reading from the N-terminus, the 350-residue chain is Mannonate dehydratase (350 aa).

This sequence belongs to the mannonate dehydratase family. Fe(2+) serves as cofactor. The cofactor is Mn(2+).

It carries out the reaction D-mannonate = 2-dehydro-3-deoxy-D-gluconate + H2O. The protein operates within carbohydrate metabolism; pentose and glucuronate interconversion. Its function is as follows. Catalyzes the dehydration of D-mannonate. This Clostridium perfringens (strain 13 / Type A) protein is Mannonate dehydratase.